Consider the following 704-residue polypeptide: Elongation factor G (704 aa).

One can recognise a tr-type G domain in the interval 10–290 (NKVRNIGIMA…AVVDFLPNPL (281 aa)). GTP-binding positions include 19 to 26 (AHIDAGKT), 83 to 87 (DTPGH), and 137 to 140 (NKMD).

Belongs to the TRAFAC class translation factor GTPase superfamily. Classic translation factor GTPase family. EF-G/EF-2 subfamily.

It localises to the cytoplasm. Functionally, catalyzes the GTP-dependent ribosomal translocation step during translation elongation. During this step, the ribosome changes from the pre-translocational (PRE) to the post-translocational (POST) state as the newly formed A-site-bound peptidyl-tRNA and P-site-bound deacylated tRNA move to the P and E sites, respectively. Catalyzes the coordinated movement of the two tRNA molecules, the mRNA and conformational changes in the ribosome. This chain is Elongation factor G, found in Paenarthrobacter aurescens (strain TC1).